An 83-amino-acid chain; its full sequence is MKIMQVEKTLVSTNRIADMGHKPLLVVWEKPGAPRQVAVDAIGCIPGDWVLCVGSSAAREAAGSKSYPSDLTIIGIIDQWNGE.

Residues 1-78 (MKIMQVEKTL…SDLTIIGIID (78 aa)) form the BMV domain.

This sequence belongs to the CcmL/EutN family. CsoS4 subfamily. As to quaternary structure, homopentamer.

Its subcellular location is the carboxysome. Functionally, probably forms vertices in the carboxysome, a polyhedral inclusion where RuBisCO (ribulose bisphosphate carboxylase, cbbL-cbbS) is sequestered. Has been modeled to induce curvature upon insertion into an otherwise flat hexagonal layer of major carboxysome subunits. A minor shell protein, only 12 pentamers of CsoS4A/CsoS4B are calculated to be present in each carboxysome. The 2 CsoS4 proteins contribute to the impermeability of the carboxysome to CO(2). Unlike beta-carboxysomes, alpha-carboxysomes (Cb) can form without cargo protein. CsoS2 is essential for Cb formation and is also capable of targeting foreign proteins to the Cb. The Cb shell assembles with the aid of CsoS2; CsoS1A, CsoS1B and CsoS1C form the majority of the shell while CsoS4A and CsoS4B form vertices. CsoS1D forms pseudohexamers that probably control metabolite flux into and out of the shell. The protein is Carboxysome shell vertex protein CsoS4A of Halothiobacillus neapolitanus (strain ATCC 23641 / c2) (Thiobacillus neapolitanus).